We begin with the raw amino-acid sequence, 581 residues long: DNA polymerase alpha subunit B (581 aa).

It belongs to the DNA polymerase alpha subunit B family. In terms of assembly, DNA polymerase alpha:primase is a four subunit enzyme complex, which is assembled throughout the cell cycle, and consists of the two DNA polymerase subunits A and B, and the DNA primase large and small subunits. Subunit B binds to subunit A.

Its subcellular location is the nucleus. May play an essential role at the early stage of chromosomal DNA replication by coupling the polymerase alpha/primase complex to the cellular replication machinery. Required for the distribution of pie-1 in cell divsion. The sequence is that of DNA polymerase alpha subunit B (div-1) from Caenorhabditis elegans.